Here is a 117-residue protein sequence, read N- to C-terminus: Large-conductance mechanosensitive channel (117 aa).

3 helical membrane passes run 7 to 27 (EFAL…GAAF), 30 to 50 (IVTA…FGTV), and 64 to 84 (GMFV…FIFV).

This sequence belongs to the MscL family. As to quaternary structure, homopentamer.

Its subcellular location is the cell membrane. In terms of biological role, channel that opens in response to stretch forces in the membrane lipid bilayer. May participate in the regulation of osmotic pressure changes within the cell. The sequence is that of Large-conductance mechanosensitive channel from Staphylococcus saprophyticus subsp. saprophyticus (strain ATCC 15305 / DSM 20229 / NCIMB 8711 / NCTC 7292 / S-41).